Here is a 209-residue protein sequence, read N- to C-terminus: MDKTQLILLGLPIFLLCSDLFNLFTPPPPKSQHQSPPSISETLDFPAQKSTGVGYGNTVEINFCISCSYKGTAVSMKKMLESVFPGLDVVLANYPAPAPKRILAKVVPVAQVGVIGLIMGGEQIFPMIGIAQPPAWYHSLRANRFGSMASTWLLGNFLQSFLQSSGAFEVSCNGELVFSKLKEGRFPGEIELRDLISGTMTKPFVTGSY.

The N-terminal stretch at 1-22 is a signal peptide; that stretch reads MDKTQLILLGLPIFLLCSDLFN. Cys64 and Cys67 are disulfide-bonded.

This sequence belongs to the SelWTH family. SELT subfamily.

In Arabidopsis thaliana (Mouse-ear cress), this protein is SelT-like protein.